The sequence spans 87 residues: Conotoxin QcMNCL-XIII0.1 (87 aa).

The signal sequence occupies residues Met1–Ala18. Positions Leu19–Arg34 are excised as a propeptide.

Contains 4 disulfide bonds. As to expression, expressed by the venom duct.

It is found in the secreted. Its function is as follows. May interact and inhibit Cav3.1/CACNA1G calcium channels. In a ex vivo model, shows ability to block nerve signal transduction. In Conus quercinus (Oak cone), this protein is Conotoxin QcMNCL-XIII0.1.